Reading from the N-terminus, the 331-residue chain is Glyceraldehyde-3-phosphate dehydrogenase (331 aa).

NAD(+)-binding positions include 11 to 12 (RI), aspartate 33, and arginine 78. D-glyceraldehyde 3-phosphate-binding positions include 148 to 150 (SCT), threonine 179, 208 to 209 (TG), and arginine 231. Cysteine 149 serves as the catalytic Nucleophile. Position 313 (asparagine 313) interacts with NAD(+).

Belongs to the glyceraldehyde-3-phosphate dehydrogenase family. In terms of assembly, homotetramer.

The protein resides in the cytoplasm. It carries out the reaction D-glyceraldehyde 3-phosphate + phosphate + NAD(+) = (2R)-3-phospho-glyceroyl phosphate + NADH + H(+). It participates in carbohydrate degradation; glycolysis; pyruvate from D-glyceraldehyde 3-phosphate: step 1/5. This chain is Glyceraldehyde-3-phosphate dehydrogenase (GPD), found in Eremothecium gossypii (strain ATCC 10895 / CBS 109.51 / FGSC 9923 / NRRL Y-1056) (Yeast).